The chain runs to 204 residues: Imidazoleglycerol-phosphate dehydratase (204 aa).

Belongs to the imidazoleglycerol-phosphate dehydratase family.

Its subcellular location is the cytoplasm. It carries out the reaction D-erythro-1-(imidazol-4-yl)glycerol 3-phosphate = 3-(imidazol-4-yl)-2-oxopropyl phosphate + H2O. Its pathway is amino-acid biosynthesis; L-histidine biosynthesis; L-histidine from 5-phospho-alpha-D-ribose 1-diphosphate: step 6/9. The polypeptide is Imidazoleglycerol-phosphate dehydratase (Rhodococcus jostii (strain RHA1)).